The primary structure comprises 161 residues: D-amino-acid N-acetyltransferase HPA3 (161 aa).

An N-acetylserine modification is found at Ser2. Positions Ile14–Tyr161 constitute an N-acetyltransferase domain. An acetyl-CoA-binding site is contributed by Leu98 to Arg111.

This sequence belongs to the acetyltransferase family. GNAT subfamily. Post-translationally, autoacetylates in an intermolecular reaction.

The protein resides in the cytoplasm. It is found in the nucleus. The enzyme catalyses a D-alpha-amino acid + acetyl-CoA = an N-acetyl-D-amino acid + CoA + H(+). Functionally, N-acetyltransferase that acts on a wide range of D-amino acids. Catalyzes the N-acetylation through an ordered bi-bi mechanism, in which acetyl-CoA is the first substrate to be bound and CoA is the last product to be liberated. D-amino acids are toxic for the cell and their N-acetylation, preceding removal from cells, plays an important role in detoxification of D-amino acids. In vitro, capable of acetylating histone H4 at 'Lys-8' and polyamines like putrescine, spermidine and spermine. This is D-amino-acid N-acetyltransferase HPA3 from Saccharomyces cerevisiae (strain ATCC 204508 / S288c) (Baker's yeast).